The chain runs to 265 residues: 5'-nucleotidase SurE (265 aa).

A divalent metal cation is bound by residues D8, D9, S40, and N98.

Belongs to the SurE nucleotidase family. Requires a divalent metal cation as cofactor.

The protein localises to the cytoplasm. It carries out the reaction a ribonucleoside 5'-phosphate + H2O = a ribonucleoside + phosphate. Nucleotidase that shows phosphatase activity on nucleoside 5'-monophosphates. The polypeptide is 5'-nucleotidase SurE (Nostoc sp. (strain PCC 7120 / SAG 25.82 / UTEX 2576)).